Reading from the N-terminus, the 497-residue chain is MADRPIRVRYAPSPTGHLHIGNARTALFNYLFARHNNGTLVLRIEDTDTKRNVADGEKSQMENLHWLGIDWDEGPDKGGDFGPYRQSERKDIYDKLIKQLVDKGFAYESYRTEEELKADREAQKARHEMPHYEYEYEGMTDAEKADAIAAAKAKGLEPVIRFHIPMDKTYEWDDIVKGKISIDANTLGGDFVIQKRDGMPTYNFAVVVDDHMMQISHVLRGDDHIANTPKQLAIYDAFGWEPPIFGHMTLIINGATGKKLSKRDETVLQFIEQYRELGYLPDAMFNFITLLGWSPVGEDEIFTKKEFIKQFDPKRLSKSPARFDQKKLEWVNNQYIKAKQKTNPNELMSLSLANLIEDGKIHSDPDPKTIEWARQLISLYTDQMSYTAQISKLADIFFDKATDLTDDERKELADDNAKPVIEAFAKKIRALDTFDAYSIGGIVNEVKQETKVKGRKLYMPIRIAATLRMHGPQLAETIELMGRDQVLKNVDLVTGQL.

The short motif at 12-22 (PSPTGHLHIGN) is the 'HIGH' region element. A 'KMSKS' region motif is present at residues 259–263 (KLSKR). Lys262 contacts ATP.

Belongs to the class-I aminoacyl-tRNA synthetase family. Glutamate--tRNA ligase type 1 subfamily. Monomer.

Its subcellular location is the cytoplasm. It carries out the reaction tRNA(Glu) + L-glutamate + ATP = L-glutamyl-tRNA(Glu) + AMP + diphosphate. In terms of biological role, catalyzes the attachment of glutamate to tRNA(Glu) in a two-step reaction: glutamate is first activated by ATP to form Glu-AMP and then transferred to the acceptor end of tRNA(Glu). This is Glutamate--tRNA ligase from Lacticaseibacillus casei (strain BL23) (Lactobacillus casei).